Here is a 252-residue protein sequence, read N- to C-terminus: 2-succinyl-6-hydroxy-2,4-cyclohexadiene-1-carboxylate synthase (252 aa).

It belongs to the AB hydrolase superfamily. MenH family. Monomer.

The catalysed reaction is 5-enolpyruvoyl-6-hydroxy-2-succinyl-cyclohex-3-ene-1-carboxylate = (1R,6R)-6-hydroxy-2-succinyl-cyclohexa-2,4-diene-1-carboxylate + pyruvate. Its pathway is quinol/quinone metabolism; 1,4-dihydroxy-2-naphthoate biosynthesis; 1,4-dihydroxy-2-naphthoate from chorismate: step 3/7. It functions in the pathway quinol/quinone metabolism; menaquinone biosynthesis. Catalyzes a proton abstraction reaction that results in 2,5-elimination of pyruvate from 2-succinyl-5-enolpyruvyl-6-hydroxy-3-cyclohexene-1-carboxylate (SEPHCHC) and the formation of 2-succinyl-6-hydroxy-2,4-cyclohexadiene-1-carboxylate (SHCHC). This chain is 2-succinyl-6-hydroxy-2,4-cyclohexadiene-1-carboxylate synthase, found in Escherichia coli O7:K1 (strain IAI39 / ExPEC).